The chain runs to 351 residues: E3 ubiquitin-protein ligase TRIM63 (351 aa).

The segment at 23–79 adopts an RING-type zinc-finger fold; sequence CPICLEMFTKPVVILPCQHNLCRKCANDIFQAANPYWTNRGGSVSMSGGRFRCPSCR. An interaction with TTN region spans residues 74 to 218; sequence RCPSCRHEVI…LSHKFDALYA (145 aa). A B box-type zinc finger spans residues 117–159; it reads GSHPMCKEHEDEKINIYCLTCEVPTCSLCKVFGAHQACEVAPL. 4 residues coordinate Zn(2+): cysteine 122, histidine 125, cysteine 145, and histidine 151. Residues 189–269 are a coiled coil; that stretch reads SQLEDSCRVT…VETAIQSLDE (81 aa). The region spanning 267 to 325 is the COS domain; the sequence is LDEPGGATFLLSAKPLIKSIVEASKGCQLGKTEQGFENMDYFTLNLEHIAEALRAIDFG. Over residues 326–345 the composition is skewed to acidic residues; that stretch reads TDEEEEFTEEEEEEDQEEGV. A disordered region spans residues 326-351; the sequence is TDEEEEFTEEEEEEDQEEGVSTEGHQ.

In terms of assembly, homodimer. Homooligomer and heterooligomer. Interacts with SUMO2, titin/TTN and GMEB1. Interacts with TRIM54 and probably with TRIM55 and TNNI3. Forms a ternary complex with RACK1 and PRKCE. Interacts with CKM. As to expression, muscle specific. Selectively expressed in heart and skeletal muscle.

It localises to the cytoplasm. The protein resides in the nucleus. The protein localises to the myofibril. It is found in the sarcomere. Its subcellular location is the m line. It localises to the z line. The catalysed reaction is S-ubiquitinyl-[E2 ubiquitin-conjugating enzyme]-L-cysteine + [acceptor protein]-L-lysine = [E2 ubiquitin-conjugating enzyme]-L-cysteine + N(6)-ubiquitinyl-[acceptor protein]-L-lysine.. It participates in protein modification; protein ubiquitination. Functionally, E3 ubiquitin ligase. Mediates the ubiquitination and subsequent proteasomal degradation of CKM, GMEB1 and HIBADH. Regulates the proteasomal degradation of muscle proteins under amino acid starvation, where muscle protein is catabolized to provide other organs with amino acids. Inhibits de novo skeletal muscle protein synthesis under amino acid starvation. Regulates proteasomal degradation of cardiac troponin I/TNNI3 and probably of other sarcomeric-associated proteins. May play a role in striated muscle atrophy and hypertrophy by regulating an anti-hypertrophic PKC-mediated signaling pathway. May regulate the organization of myofibrils through TTN in muscle cells. In Rattus norvegicus (Rat), this protein is E3 ubiquitin-protein ligase TRIM63 (Trim63).